Consider the following 748-residue polypeptide: MIIMKSIILLLAWFLTKTQANMLTESLYLSEYEGSVVLNIIDKNLNGISTLSIFNDSTKLQEVRYVASVCSLRSGSFNITCNVITYGTYHVRMFLSGLNMSAFDLYRLRYVYVGLRDAINYNPKYAEAVMAPFALIGNNNIVTIKLIKDGDNITVGCGFGNVDLSTVNTHASKIGRNINPRFMVGVYTNDSNKLIEDDIYSRYTDSESAGVMRKCNLNEVKTTPQEDCIQPFCTKGTVYGNNLVYGSRLRCFSRTRCSQRSRTVPQSVPWYIPSGFTGKQFMYLDNRLGYLLGLDLTTAIFKYTPIVVGHIVSEYLTGIMNYKRLSVRKGPNIDMRGIIGGEIKMILIRNYRKMLDMSGFTPLPVNGCYVTVIKFIGDKRVFNRVWTPSNNTDDGEEHVFVFHQKRSSNIRDYTLRIFPDSGMDTEGSKYTMNTITDVGCSRETHHKSVYPATIKKAIERFCVDQPNISCEYVKDIDRVDINPCGCKQRANRCGERYSNNTLKATIEFEVPKIYDTPYTCEFLGYKSVNSLTFDSPPPPPTTTQAPPPPPTTTQAPPPPPTTTQAPPPPIVINTTAAPLAPITNATLPPSDVITPEAVNLTDDTPVVNEPVNSTFINDTDVLDDSPTTSAPQAPGIVGIIVNKITTTPAPSIGRAPIPPPDVPVEPPRSIPTTNAPSPEEDTVVLSKSDIMRRFLIRLKTRDGETVDIYTWPELNLAPFKTLSYAGIGVVSFALLFTILVVCLIKFSI.

A signal peptide spans 1–20 (MIIMKSIILLLAWFLTKTQA). Topologically, residues 21–723 (NMLTESLYLS…LNLAPFKTLS (703 aa)) are extracellular. 8 N-linked (GlcNAc...) asparagine; by host glycosylation sites follow: N55, N78, N99, N152, N189, N390, N467, and N499. Positions 531–574 (LTFDSPPPPPTTTQAPPPPPTTTQAPPPPPTTTQAPPPPIVINT) are disordered. Positions 535–570 (SPPPPPTTTQAPPPPPTTTQAPPPPPTTTQAPPPPI) are enriched in pro residues. N-linked (GlcNAc...) asparagine; by host glycans are attached at residues N573, N584, N599, N612, and N617. A disordered region spans residues 650–680 (PSIGRAPIPPPDVPVEPPRSIPTTNAPSPEE). Pro residues predominate over residues 656–669 (PIPPPDVPVEPPRS). A helical transmembrane segment spans residues 724–744 (YAGIGVVSFALLFTILVVCLI). Residues 745–748 (KFSI) are Cytoplasmic-facing.

The protein resides in the host membrane. This Magallana gigas (Pacific oyster) protein is Putative transmembrane protein ORF88.